The sequence spans 764 residues: Ergosteryl-beta-glucosidase (764 aa).

Glu515 acts as the Nucleophile in catalysis. Residues 588–629 (HDTRAKTPTPEPSPASTVASVSTSTSKSGSSQPPSFIKPDNH) are disordered. Thr594 bears the Phosphothreonine mark. A compositionally biased stretch (low complexity) spans 601–622 (PASTVASVSTSTSKSGSSQPPS).

The protein belongs to the glycosyl hydrolase 5 (cellulase A) family.

The protein localises to the cytoplasm. It localises to the cytosol. The protein resides in the vacuole membrane. The enzyme catalyses ergosteryl 3-beta-D-glucoside + H2O = ergosterol + D-glucose. Its function is as follows. Ergosteryl beta-glucosidase involved in the ergosteryl beta-glucoside (EG) catabolic pathway and vacuole formation via hydrolysis of EG to generate glucose. Is also able to hydrolyze cholesteryl beta-glucoside and sitosteryl beta-glucoside to generate glucose; and C6-7-nitro-2,1,3-benzoxadiazole (NBD)-GlcCer to generate C6-NBD-ceramide (Cer). This chain is Ergosteryl-beta-glucosidase, found in Saccharomyces cerevisiae (strain ATCC 204508 / S288c) (Baker's yeast).